Consider the following 113-residue polypeptide: MAARVLASVIVMGSGIIARACTQAYRQALANASKTGVAHEATQTIKRGLTIGEAEARQILGVTEKSSWDEILKKYDTLFERNAQNGSFYLQSKVHRAKECLETAYQKSTTTSA.

Residues 1-48 (MAARVLASVIVMGSGIIARACTQAYRQALANASKTGVAHEATQTIKRG) constitute a mitochondrion transit peptide. Positions 55–104 (EARQILGVTEKSSWDEILKKYDTLFERNAQNGSFYLQSKVHRAKECLETA) are J-like.

Belongs to the TIM16/PAM16 family. In terms of tissue distribution, expressed at low levels in seedlings, rosettes and inflorescence.

The protein resides in the mitochondrion inner membrane. Regulates ATP-dependent protein translocation into the mitochondrial matrix. This chain is Mitochondrial import inner membrane translocase subunit PAM16 like 1, found in Arabidopsis thaliana (Mouse-ear cress).